A 113-amino-acid polypeptide reads, in one-letter code: Iron-sulfur cluster insertion protein ErpA (113 aa).

Residues C41, C105, and C107 each contribute to the iron-sulfur cluster site.

The protein belongs to the HesB/IscA family. In terms of assembly, homodimer. Iron-sulfur cluster serves as cofactor.

Its function is as follows. Required for insertion of 4Fe-4S clusters for at least IspG. The protein is Iron-sulfur cluster insertion protein ErpA of Glaesserella parasuis serovar 5 (strain SH0165) (Haemophilus parasuis).